Consider the following 621-residue polypeptide: Putative zinc metalloprotease CPn_0344/CP_0416/CPj0344/CpB0350 (621 aa).

Residue His-20 coordinates Zn(2+). Residue Glu-21 is part of the active site. His-24 serves as a coordination point for Zn(2+). The next 3 membrane-spanning stretches (helical) occupy residues 103–125, 561–583, and 596–613; these read ILVL…SILY, VLNL…WEIV, and ILVP…FLTF.

Belongs to the peptidase M50B family. Zn(2+) is required as a cofactor.

Its subcellular location is the cell inner membrane. The chain is Putative zinc metalloprotease CPn_0344/CP_0416/CPj0344/CpB0350 from Chlamydia pneumoniae (Chlamydophila pneumoniae).